A 125-amino-acid chain; its full sequence is Secreted RxLR effector protein 55 (125 aa).

Positions 1–21 are cleaved as a signal peptide; that stretch reads MAASRSSITTLLLLIVAVALG. The RxLR signature appears at 35 to 38; it reads RQLR. Over residues 51–87 the composition is skewed to low complexity; sequence ESATSSSSSSALDHKSSAPGEATNASETEHSAASTAS. Residues 51 to 96 form a disordered region; it reads ESATSSSSSSALDHKSSAPGEATNASETEHSAASTASEPKHEGPTM. The N-linked (GlcNAc...) asparagine glycan is linked to Asn74. Residues 99 to 119 traverse the membrane as a helical segment; that stretch reads FVGPAAAGVLAILLIGAVIAF.

This sequence belongs to the RxLR effector family.

The protein resides in the secreted. The protein localises to the host cell membrane. Effector that acts as a broad suppressor of cell death to interrupt plant immunity. Inhibits cell death induced by cell death-inducing proteins, including the PAMP elicitor INF1 from P.infestans. In Plasmopara viticola (Downy mildew of grapevine), this protein is Secreted RxLR effector protein 55.